Reading from the N-terminus, the 74-residue chain is Peptide BmKa2 (74 aa).

The first 24 residues, 1–24 (MSSKTLLVLLLVGVLVSTFFTADA), serve as a signal peptide directing secretion.

Belongs to the non-disulfide-bridged peptide (NDBP) superfamily. Long chain multifunctional peptide (group 2) family. As to expression, expressed by the venom gland.

It is found in the secreted. In terms of biological role, highly acidic peptide that may have antibacterial activity. The protein is Peptide BmKa2 of Olivierus martensii (Manchurian scorpion).